The following is a 419-amino-acid chain: Transcription termination factor Rho (419 aa).

Residues 48 to 123 (DIFGDGVLEI…LKVNEVNFDK (76 aa)) enclose the Rho RNA-BD domain. RNA-binding regions lie at residues 61 to 66 (GFGFLR), 78 to 80 (DIY), and 108 to 110 (ERY). ATP-binding positions include 169–174 (GRGQRG), 181–186 (KAGKTM), and R212. The RNA-binding 2 stretch occupies residues 284-288 (VLTGG).

It belongs to the Rho family. Homohexamer. The homohexamer assembles into an open ring structure.

Functionally, facilitates transcription termination by a mechanism that involves Rho binding to the nascent RNA, activation of Rho's RNA-dependent ATPase activity, and release of the mRNA from the DNA template. The sequence is that of Transcription termination factor Rho from Escherichia coli O157:H7.